The primary structure comprises 539 residues: Phosphoenolpyruvate carboxykinase (ATP) (539 aa).

Arg-64, Tyr-206, and Lys-212 together coordinate substrate. ATP-binding positions include Lys-212, His-231, and 247 to 255; that span reads GLSGTGKTT. Mn(2+) is bound by residues Lys-212 and His-231. Asp-268 serves as a coordination point for Mn(2+). Residues Glu-296, Arg-332, 448-449, and Thr-454 each bind ATP; that span reads RI. A substrate-binding site is contributed by Arg-332.

This sequence belongs to the phosphoenolpyruvate carboxykinase (ATP) family. As to quaternary structure, monomer. Mn(2+) is required as a cofactor.

The protein localises to the cytoplasm. It catalyses the reaction oxaloacetate + ATP = phosphoenolpyruvate + ADP + CO2. Its pathway is carbohydrate biosynthesis; gluconeogenesis. In terms of biological role, involved in the gluconeogenesis. Catalyzes the conversion of oxaloacetate (OAA) to phosphoenolpyruvate (PEP) through direct phosphoryl transfer between the nucleoside triphosphate and OAA. The polypeptide is Phosphoenolpyruvate carboxykinase (ATP) (Pectobacterium carotovorum subsp. carotovorum (strain PC1)).